The chain runs to 163 residues: Lipoprotein signal peptidase (163 aa).

4 helical membrane passes run 9-29, 39-59, 67-87, and 92-112; these read YLAI…SALS, VLPF…SFLA, WFFT…LYKS, and LLCI…LDRV. Catalysis depends on residues Asp-119 and Asp-137. A helical transmembrane segment spans residues 130–150; that stretch reads WPAFNIADSAICVGAALIIWG.

It belongs to the peptidase A8 family.

The protein localises to the cell inner membrane. The enzyme catalyses Release of signal peptides from bacterial membrane prolipoproteins. Hydrolyzes -Xaa-Yaa-Zaa-|-(S,diacylglyceryl)Cys-, in which Xaa is hydrophobic (preferably Leu), and Yaa (Ala or Ser) and Zaa (Gly or Ala) have small, neutral side chains.. Its pathway is protein modification; lipoprotein biosynthesis (signal peptide cleavage). This protein specifically catalyzes the removal of signal peptides from prolipoproteins. The protein is Lipoprotein signal peptidase of Polynucleobacter necessarius subsp. necessarius (strain STIR1).